We begin with the raw amino-acid sequence, 70 residues long: Exodeoxyribonuclease 7 small subunit (70 aa).

It belongs to the XseB family. Heterooligomer composed of large and small subunits.

The protein localises to the cytoplasm. The enzyme catalyses Exonucleolytic cleavage in either 5'- to 3'- or 3'- to 5'-direction to yield nucleoside 5'-phosphates.. Functionally, bidirectionally degrades single-stranded DNA into large acid-insoluble oligonucleotides, which are then degraded further into small acid-soluble oligonucleotides. This Streptococcus gordonii (strain Challis / ATCC 35105 / BCRC 15272 / CH1 / DL1 / V288) protein is Exodeoxyribonuclease 7 small subunit.